A 234-amino-acid chain; its full sequence is Demethylmenaquinone methyltransferase (234 aa).

S-adenosyl-L-methionine-binding positions include threonine 62, aspartate 80, aspartate 100–alanine 101, and serine 117.

Belongs to the class I-like SAM-binding methyltransferase superfamily. MenG/UbiE family.

The enzyme catalyses a 2-demethylmenaquinol + S-adenosyl-L-methionine = a menaquinol + S-adenosyl-L-homocysteine + H(+). Its pathway is quinol/quinone metabolism; menaquinone biosynthesis; menaquinol from 1,4-dihydroxy-2-naphthoate: step 2/2. Methyltransferase required for the conversion of demethylmenaquinol (DMKH2) to menaquinol (MKH2). This chain is Demethylmenaquinone methyltransferase, found in Mycobacterium bovis (strain ATCC BAA-935 / AF2122/97).